Consider the following 34-residue polypeptide: Photosystem II reaction center protein M (34 aa).

Residues 5 to 25 (ILAFIATALFILVPTAFLLII) traverse the membrane as a helical segment.

The protein belongs to the PsbM family. In terms of assembly, PSII is composed of 1 copy each of membrane proteins PsbA, PsbB, PsbC, PsbD, PsbE, PsbF, PsbH, PsbI, PsbJ, PsbK, PsbL, PsbM, PsbT, PsbX, PsbY, PsbZ, Psb30/Ycf12, at least 3 peripheral proteins of the oxygen-evolving complex and a large number of cofactors. It forms dimeric complexes.

It localises to the plastid. Its subcellular location is the chloroplast thylakoid membrane. Its function is as follows. One of the components of the core complex of photosystem II (PSII). PSII is a light-driven water:plastoquinone oxidoreductase that uses light energy to abstract electrons from H(2)O, generating O(2) and a proton gradient subsequently used for ATP formation. It consists of a core antenna complex that captures photons, and an electron transfer chain that converts photonic excitation into a charge separation. This subunit is found at the monomer-monomer interface. In Buxus microphylla (Littleleaf boxwood), this protein is Photosystem II reaction center protein M.